Here is a 468-residue protein sequence, read N- to C-terminus: Plant UBX domain-containing protein 7 (468 aa).

N-acetylmethionine is present on Met1. One can recognise a UBA-like domain in the interval 7-48 (SGDQQRLVSSFLEIAVGQTAETARQFLQATSWKLEEAIQLFY). Disordered stretches follow at residues 138–168 (KSPG…SAPR) and 299–329 (HFAS…KDEE). Residues 150 to 166 (SSASASASASASESASA) are compositionally biased toward low complexity. Residues 328-347 (EEEEELQRALAASLEDNNMK) enclose the UIM domain. In terms of domain architecture, UBX spans 385-466 (DRSLQCRVGI…GVANSMISAT (82 aa)).

In terms of assembly, interacts with CDC48A via its UBX domain and with ubiquitin via its N-terminal UBA-like domain. As to expression, expressed broadly in sporophyte and gametophyte cells.

Its subcellular location is the nucleus. Acts as a bridge between CDC48A and ubiquitin, suggesting a role in targeted protein degradation. In Arabidopsis thaliana (Mouse-ear cress), this protein is Plant UBX domain-containing protein 7.